Reading from the N-terminus, the 391-residue chain is Phosphoglycerate kinase (391 aa).

Substrate is bound by residues 21–23, R36, 59–62, R113, and R146; these read DLN and HLGR. Residues K197, E319, and 345 to 348 each bind ATP; that span reads GGDT.

This sequence belongs to the phosphoglycerate kinase family. As to quaternary structure, monomer.

Its subcellular location is the cytoplasm. The enzyme catalyses (2R)-3-phosphoglycerate + ATP = (2R)-3-phospho-glyceroyl phosphate + ADP. Its pathway is carbohydrate degradation; glycolysis; pyruvate from D-glyceraldehyde 3-phosphate: step 2/5. In Shewanella sp. (strain W3-18-1), this protein is Phosphoglycerate kinase.